The sequence spans 231 residues: Large ribosomal subunit protein uL1 (231 aa).

This sequence belongs to the universal ribosomal protein uL1 family. As to quaternary structure, part of the 50S ribosomal subunit.

Binds directly to 23S rRNA. The L1 stalk is quite mobile in the ribosome, and is involved in E site tRNA release. Its function is as follows. Protein L1 is also a translational repressor protein, it controls the translation of the L11 operon by binding to its mRNA. The protein is Large ribosomal subunit protein uL1 of Allorhizobium ampelinum (strain ATCC BAA-846 / DSM 112012 / S4) (Agrobacterium vitis (strain S4)).